Consider the following 609-residue polypeptide: Membrane protein insertase YidC (609 aa).

The helical transmembrane segment at Ile-9–Pro-29 threads the bilayer. The disordered stretch occupies residues Arg-35–Ala-63. A run of 4 helical transmembrane segments spans residues Val-375–Phe-395, Leu-449–Ile-469, Leu-507–Phe-527, and Trp-546–Trp-566.

The protein belongs to the OXA1/ALB3/YidC family. Type 1 subfamily. In terms of assembly, interacts with the Sec translocase complex via SecD. Specifically interacts with transmembrane segments of nascent integral membrane proteins during membrane integration.

It is found in the cell inner membrane. Its function is as follows. Required for the insertion and/or proper folding and/or complex formation of integral membrane proteins into the membrane. Involved in integration of membrane proteins that insert both dependently and independently of the Sec translocase complex, as well as at least some lipoproteins. Aids folding of multispanning membrane proteins. This chain is Membrane protein insertase YidC, found in Nitrobacter hamburgensis (strain DSM 10229 / NCIMB 13809 / X14).